We begin with the raw amino-acid sequence, 959 residues long: Protein SEY1 homolog 1 (959 aa).

The Cytoplasmic segment spans residues 1-767; sequence MQESDVFHNQ…ELAAITVHSK (767 aa). The stretch at 9-86 forms a coiled coil; that stretch reads NQLRVEMLKK…EEEKKEKENY (78 aa). Positions 62–81 are disordered; sequence EEKENMKVEEEEIKEEEEKK. The GB1/RHD3-type G domain occupies 123 to 340; it reads GFNYNMLSIL…NQNTYFRPIY (218 aa). 133 to 140 lines the GTP pocket; the sequence is GPQNSGKS. A helical membrane pass occupies residues 768–788; the sequence is TPMWLILLIAFLSFDNIVYVF. Residues 789 to 791 are Lumenal-facing; that stretch reads KSP. The helical transmembrane segment at 792–812 threads the bilayer; sequence TLLALTLIIIGIIYSLNKIGY. Residues 813 to 959 lie on the Cytoplasmic side of the membrane; that stretch reads AYLIDSVISY…LNKIKEANEF (147 aa). Positions 849 to 868 are disordered; sequence EAPKRKRPQKKTQDDKPKSS.

It belongs to the TRAFAC class dynamin-like GTPase superfamily. GB1/RHD3 GTPase family. RHD3 subfamily.

It localises to the endoplasmic reticulum membrane. In terms of biological role, probable GTP-binding protein that may be involved in cell development. In Entamoeba histolytica (strain ATCC 30459 / HM-1:IMSS / ABRM), this protein is Protein SEY1 homolog 1.